The sequence spans 207 residues: MGKCSGRCTLVAFCCLQLVAALERQIFDFLGYQWAPILANFLHIMAVILGIFGTVQYRSRYLILYAAWLVLWVGWNAFIICFYLEVGQLSQDRDFIMTFNTSLHRSWWMENGPGCLVTPVLNSRLALEDHHVISVTGCLLDYPYIEALSSALQIFLALFGFVFACYVSKVFLEEEDSFDFIGGFDSYGYQAPQKTSHLQLQPLYTSG.

The signal sequence occupies residues 1–21 (MGKCSGRCTLVAFCCLQLVAA). Over 22–34 (LERQIFDFLGYQW) the chain is Extracellular. The helical transmembrane segment at 35-55 (APILANFLHIMAVILGIFGTV) threads the bilayer. Residues 56 to 61 (QYRSRY) lie on the Cytoplasmic side of the membrane. A helical transmembrane segment spans residues 62–82 (LILYAAWLVLWVGWNAFIICF). Topologically, residues 83-146 (YLEVGQLSQD…GCLLDYPYIE (64 aa)) are extracellular. N100 carries an N-linked (GlcNAc...) asparagine glycan. The helical transmembrane segment at 147-167 (ALSSALQIFLALFGFVFACYV) threads the bilayer. Over 168-207 (SKVFLEEEDSFDFIGGFDSYGYQAPQKTSHLQLQPLYTSG) the chain is Cytoplasmic.

The protein belongs to the NKAIN family. Interacts with ATP1B1 C-terminus.

Its subcellular location is the cell membrane. This Homo sapiens (Human) protein is Sodium/potassium-transporting ATPase subunit beta-1-interacting protein 1 (NKAIN1).